The primary structure comprises 300 residues: GTPase Era (300 aa).

An Era-type G domain is found at Y7 to E182. The segment at G15–S22 is G1. G15 to S22 provides a ligand contact to GTP. The G2 stretch occupies residues Q41–H45. The tract at residues D62–G65 is G3. GTP contacts are provided by residues D62 to L66 and N124 to D127. The tract at residues N124 to D127 is G4. Positions I154–A156 are G5. In terms of domain architecture, KH type-2 spans T206–S283.

This sequence belongs to the TRAFAC class TrmE-Era-EngA-EngB-Septin-like GTPase superfamily. Era GTPase family. As to quaternary structure, monomer.

The protein resides in the cytoplasm. The protein localises to the cell inner membrane. An essential GTPase that binds both GDP and GTP, with rapid nucleotide exchange. Plays a role in 16S rRNA processing and 30S ribosomal subunit biogenesis and possibly also in cell cycle regulation and energy metabolism. This is GTPase Era from Histophilus somni (strain 129Pt) (Haemophilus somnus).